Consider the following 721-residue polypeptide: Cytosolic carboxypeptidase 2 (721 aa).

Positions 43–71 are disordered; it reads TASDMINSSSPSESSDSNLEEEQEESKPC. A compositionally biased stretch (low complexity) spans 50 to 59; the sequence is SSSPSESSDS. The region spanning 334–605 is the Peptidase M14 domain; it reads YPYTYSKLQH…CFCDTLLDFC (272 aa). 3 residues coordinate Zn(2+): H400, E403, and H496. The active-site Proton donor/acceptor is E569. The tract at residues 645–721 is disordered; sequence DIESSTSGSN…TQHGDTEDQS (77 aa). A compositionally biased stretch (low complexity) spans 647-660; it reads ESSTSGSNSTESDG. Positions 672 to 688 are enriched in basic residues; the sequence is GKKKLLRSRKERNRLRQ. Residues 703–714 show a composition bias toward polar residues; it reads YSCQTLNATTQH.

The protein belongs to the peptidase M14 family. Zn(2+) is required as a cofactor.

It is found in the cytoplasm. The protein resides in the cytosol. It localises to the cytoskeleton. Its subcellular location is the microtubule organizing center. The protein localises to the centrosome. It is found in the centriole. The protein resides in the cilium basal body. It catalyses the reaction (L-glutamyl)(n+1)-gamma-L-glutamyl-L-glutamyl-[protein] + H2O = (L-glutamyl)(n)-gamma-L-glutamyl-L-glutamyl-[protein] + L-glutamate. Its function is as follows. Metallocarboxypeptidase that mediates deglutamylation of target proteins. Catalyzes the deglutamylation of polyglutamate side chains generated by post-translational polyglutamylation in proteins such as tubulins. Also removes gene-encoded polyglutamates from the carboxy-terminus of target proteins such as MYLK. Does not show detyrosinase or deglycylase activities from the carboxy-terminus of tubulin. Functionally, metallocarboxypeptidase that mediates deglutamylation of tubulin and non-tubulin target proteins. Catalyzes the removal of polyglutamate side chains present on the gamma-carboxyl group of glutamate residues within the C-terminal tail of tubulin protein. Specifically cleaves tubulin long-side-chains, while it is not able to remove the branching point glutamate. Also catalyzes the removal of polyglutamate residues from the carboxy-terminus of non-tubulin proteins. This is Cytosolic carboxypeptidase 2 (zte25) from Danio rerio (Zebrafish).